A 274-amino-acid chain; its full sequence is Thiamine kinase (274 aa).

Belongs to the thiamine kinase family.

It catalyses the reaction thiamine + ATP = thiamine phosphate + ADP + H(+). It participates in cofactor biosynthesis; thiamine diphosphate biosynthesis; thiamine phosphate from thiamine: step 1/1. Catalyzes the ATP-dependent phosphorylation of thiamine to thiamine phosphate. Is involved in thiamine salvage. The chain is Thiamine kinase from Salmonella choleraesuis (strain SC-B67).